Consider the following 140-residue polypeptide: Acyl carrier protein 1, chloroplastic (140 aa).

A chloroplast-targeting transit peptide spans 1–56 (MASAAAGASICIKSASFSPLAPGRISSLRSVSLPVSRKSFPSLKSSKSSFALRVSC). A Carrier domain is found at 60 to 135 (PETVAKVCGI…DAADLIEKLM (76 aa)). The residue at position 95 (Ser-95) is an O-(pantetheine 4'-phosphoryl)serine.

It belongs to the acyl carrier protein (ACP) family. 4'-phosphopantetheine is transferred from CoA to a specific serine of apo-ACP by acpS. This modification is essential for activity because fatty acids are bound in thioester linkage to the sulfhydryl of the prosthetic group.

It is found in the plastid. The protein resides in the chloroplast. It participates in lipid metabolism; fatty acid biosynthesis. Functionally, carrier of the growing fatty acid chain in fatty acid biosynthesis. The sequence is that of Acyl carrier protein 1, chloroplastic (ACL1.1) from Cuphea lanceolata (Cigar flower).